The chain runs to 322 residues: Eukaryotic translation initiation factor 3 subunit I (322 aa).

5 WD repeats span residues glycine 4 to threonine 43, glycine 46 to serine 85, methionine 141 to aspartate 180, aspartate 184 to threonine 223, and glycine 281 to glutamate 322.

Belongs to the eIF-3 subunit I family. Component of the eukaryotic translation initiation factor 3 (eIF-3) complex. The eIF-3 complex interacts with pix.

The protein localises to the cytoplasm. Component of the eukaryotic translation initiation factor 3 (eIF-3) complex, which is involved in protein synthesis of a specialized repertoire of mRNAs and, together with other initiation factors, stimulates binding of mRNA and methionyl-tRNAi to the 40S ribosome. The eIF-3 complex specifically targets and initiates translation of a subset of mRNAs involved in cell proliferation. This is Eukaryotic translation initiation factor 3 subunit I from Drosophila willistoni (Fruit fly).